The following is a 50-amino-acid chain: Protein HokA (50 aa).

Residues 7 to 24 (LLSLIVICFTLLFFTWMI) form a helical membrane-spanning segment.

It belongs to the Hok/Gef family.

Its subcellular location is the cell inner membrane. Functionally, toxic component of a type I toxin-antitoxin (TA) system. When overexpressed kills cells within minutes; causes collapse of the transmembrane potential and arrest of respiration. Its toxic effect is probably neutralized by antisense antitoxin RNA SokA. The chain is Protein HokA from Escherichia coli (strain K12).